A 241-amino-acid chain; its full sequence is Interleukin-6 (241 aa).

The tract at residues 1–25 (MNFTEGCEATGRRPGSAGSRRRRAP) is disordered. The signal sequence occupies residues 1–46 (MNFTEGCEATGRRPGSAGSRRRRAPRPGPVALLPLLLPLLLPPAAA). A disulfide bridge links cysteine 122 with cysteine 132.

The protein belongs to the IL-6 superfamily. In terms of assembly, component of a hexamer of two molecules each of IL6, IL6R and IL6ST; first binds to IL6R to associate with the signaling subunit IL6ST.

The protein resides in the secreted. Cytokine with a wide variety of biological functions in immunity, tissue regeneration, and metabolism. Binds to IL6R, then the complex associates to the signaling subunit IL6ST/gp130 to trigger the intracellular IL6-signaling pathway. The interaction with the membrane-bound IL6R and IL6ST stimulates 'classic signaling', whereas the binding of IL6 and soluble IL6R to IL6ST stimulates 'trans-signaling'. Alternatively, 'cluster signaling' occurs when membrane-bound IL6:IL6R complexes on transmitter cells activate IL6ST receptors on neighboring receiver cells. This chain is Interleukin-6 (IL6), found in Gallus gallus (Chicken).